Reading from the N-terminus, the 328-residue chain is Putative UDP-N-acetylglucosamine--dolichyl-phosphate N-acetylglucosaminephosphotransferase (328 aa).

9 consecutive transmembrane segments (helical) span residues 1–21 (MLVS…VTLI), 48–68 (VPVL…FTFL), 78–98 (IENV…LGLL), 107–127 (ATRA…SVGH), 129–149 (IISI…IIIL), 166–186 (LNGL…YIGL), 192–212 (SFYA…FLIF), 228–248 (FIGS…ALFF), and 301–321 (YHIV…AVVF).

The protein belongs to the glycosyltransferase 4 family.

The protein localises to the cell membrane. It catalyses the reaction a di-trans,poly-cis-dolichyl phosphate + UDP-N-acetyl-alpha-D-glucosamine = an N-acetyl-alpha-D-glucosaminyl-diphospho-di-trans,poly-cis-dolichol + UMP. With respect to regulation, inhibited by tunicamycin. This Sulfolobus acidocaldarius (strain ATCC 33909 / DSM 639 / JCM 8929 / NBRC 15157 / NCIMB 11770) protein is Putative UDP-N-acetylglucosamine--dolichyl-phosphate N-acetylglucosaminephosphotransferase (gnpTA).